Here is a 377-residue protein sequence, read N- to C-terminus: Alanine racemase (377 aa).

The Proton acceptor; specific for D-alanine role is filled by Lys-37. An N6-(pyridoxal phosphate)lysine modification is found at Lys-37. Arg-135 contacts substrate. Residue Tyr-271 is the Proton acceptor; specific for L-alanine of the active site. Met-319 lines the substrate pocket.

This sequence belongs to the alanine racemase family. Pyridoxal 5'-phosphate serves as cofactor.

It catalyses the reaction L-alanine = D-alanine. It functions in the pathway amino-acid biosynthesis; D-alanine biosynthesis; D-alanine from L-alanine: step 1/1. Catalyzes the interconversion of L-alanine and D-alanine. May also act on other amino acids. The sequence is that of Alanine racemase (alr) from Helicobacter pylori (strain G27).